The sequence spans 335 residues: Calcium-binding protein TgpCaBP (335 aa).

The chain crosses the membrane as a helical span at residues Leu30–Ala50. EF-hand domains follow at residues Met113–Gln148, Gln153–Glu188, Leu190–Asn225, and Val227–His262. Positions 126, 128, 130, 132, 137, 166, 168, 170, 177, 203, 205, 207, 209, 214, 240, 242, 244, and 251 each coordinate Ca(2+). Positions His332 to Leu335 match the Prevents secretion from ER motif.

It is found in the endoplasmic reticulum membrane. The protein localises to the cytoplasm. The protein resides in the cytosol. Functionally, calcium-binding protein. Participates in the efflux of intracellular Ca(2+) and storage of Ca(2+) in the endoplasmic reticulum. Required for gliding, host cell invasion and egress. Required for microneme secretion. The protein is Calcium-binding protein TgpCaBP of Toxoplasma gondii.